The chain runs to 184 residues: Cytidylate kinase (184 aa).

Position 8–16 (8–16 (GQPGSGKTT)) interacts with ATP.

It belongs to the cytidylate kinase family. Type 2 subfamily.

Its subcellular location is the cytoplasm. It carries out the reaction CMP + ATP = CDP + ADP. The enzyme catalyses dCMP + ATP = dCDP + ADP. The polypeptide is Cytidylate kinase (Pyrobaculum arsenaticum (strain DSM 13514 / JCM 11321 / PZ6)).